The chain runs to 205 residues: Small ribosomal subunit protein uS4 (205 aa).

The S4 RNA-binding domain occupies 94-157; it reads SRLDTVVYRM…KQIALIQESI (64 aa).

This sequence belongs to the universal ribosomal protein uS4 family. In terms of assembly, part of the 30S ribosomal subunit. Contacts protein S5. The interaction surface between S4 and S5 is involved in control of translational fidelity.

One of the primary rRNA binding proteins, it binds directly to 16S rRNA where it nucleates assembly of the body of the 30S subunit. Its function is as follows. With S5 and S12 plays an important role in translational accuracy. This is Small ribosomal subunit protein uS4 from Rickettsia canadensis (strain McKiel).